Consider the following 143-residue polypeptide: MSLSDTDKAVVKAIWAKISPKADEIGAEALARMLTVYPQTKTYFSHWADLSPGSGPVKKHGKTIMGAVGEAISKIDDLVGGLAALSELHAFKLRVDPANFKILSHNVIVVIAMLFPADFTPEVHVSVDKFFNNLALALSEKYR.

An N-acetylserine modification is found at Ser2. Positions 2 to 143 constitute a Globin domain; sequence SLSDTDKAVV…LALALSEKYR (142 aa). His60 serves as a coordination point for O2. His89 is a heme b binding site.

It belongs to the globin family. Heterotetramer of two alpha chains and two beta chains. As to expression, red blood cells.

Involved in oxygen transport from gills to the various peripheral tissues. This Danio rerio (Zebrafish) protein is Hemoglobin subunit alpha (hbaa1).